Here is a 98-residue protein sequence, read N- to C-terminus: Peptide YY (98 aa).

An N-terminal signal peptide occupies residues 1 to 28; the sequence is MVAVRRPWPVMVAMLLVLLACLGALVDA. A Phosphoserine modification is found at Ser41. Tyr64 is modified (tyrosine amide). Residues 68–98 constitute a propeptide that is removed on maturation; sequence EVPAALFSKLLFTDDSENLPFRSRPEGVDQW.

Belongs to the NPY family. Post-translationally, the peptide YY form is cleaved at Pro-30 by the prolyl endopeptidase FAP (seprase) activity (in vitro) to generate peptide YY(3-36).

It localises to the secreted. Its function is as follows. This gut peptide inhibits exocrine pancreatic secretion, has a vasoconstrictory action and inhibitis jejunal and colonic mobility. The sequence is that of Peptide YY (Pyy) from Rattus norvegicus (Rat).